The primary structure comprises 425 residues: Enolase (425 aa).

Q163 serves as a coordination point for (2R)-2-phosphoglycerate. The active-site Proton donor is E205. Mg(2+) contacts are provided by D242, E285, and D312. (2R)-2-phosphoglycerate is bound by residues K337, R366, S367, and K388. K337 serves as the catalytic Proton acceptor.

Belongs to the enolase family. The cofactor is Mg(2+).

The protein localises to the cytoplasm. Its subcellular location is the secreted. The protein resides in the cell surface. The enzyme catalyses (2R)-2-phosphoglycerate = phosphoenolpyruvate + H2O. Its pathway is carbohydrate degradation; glycolysis; pyruvate from D-glyceraldehyde 3-phosphate: step 4/5. In terms of biological role, catalyzes the reversible conversion of 2-phosphoglycerate (2-PG) into phosphoenolpyruvate (PEP). It is essential for the degradation of carbohydrates via glycolysis. This chain is Enolase, found in Paracoccus denitrificans (strain Pd 1222).